The sequence spans 296 residues: Ribosomal protein L11 methyltransferase (296 aa).

Residues threonine 145, glycine 166, aspartate 188, and asparagine 230 each contribute to the S-adenosyl-L-methionine site.

It belongs to the methyltransferase superfamily. PrmA family.

The protein localises to the cytoplasm. The catalysed reaction is L-lysyl-[protein] + 3 S-adenosyl-L-methionine = N(6),N(6),N(6)-trimethyl-L-lysyl-[protein] + 3 S-adenosyl-L-homocysteine + 3 H(+). In terms of biological role, methylates ribosomal protein L11. This Histophilus somni (strain 129Pt) (Haemophilus somnus) protein is Ribosomal protein L11 methyltransferase.